Consider the following 333-residue polypeptide: ADP-L-glycero-D-manno-heptose-6-epimerase (333 aa).

NADP(+)-binding positions include 11–12 (FI), 32–33 (DN), Lys39, Lys54, 76–80 (QGACS), and Asn93. Residue Tyr140 is the Proton acceptor of the active site. Lys144 is an NADP(+) binding site. Asn170 contributes to the substrate binding site. NADP(+)-binding residues include Val171 and Lys179. The Proton acceptor role is filled by Lys179. Residues Arg181, His188, 202–205 (FGGW), Arg215, and Tyr294 each bind substrate.

This sequence belongs to the NAD(P)-dependent epimerase/dehydratase family. HldD subfamily. As to quaternary structure, homopentamer. It depends on NADP(+) as a cofactor.

The catalysed reaction is ADP-D-glycero-beta-D-manno-heptose = ADP-L-glycero-beta-D-manno-heptose. Its pathway is nucleotide-sugar biosynthesis; ADP-L-glycero-beta-D-manno-heptose biosynthesis; ADP-L-glycero-beta-D-manno-heptose from D-glycero-beta-D-manno-heptose 7-phosphate: step 4/4. It participates in bacterial outer membrane biogenesis; LPS core biosynthesis. Its function is as follows. Catalyzes the interconversion between ADP-D-glycero-beta-D-manno-heptose and ADP-L-glycero-beta-D-manno-heptose via an epimerization at carbon 6 of the heptose. The sequence is that of ADP-L-glycero-D-manno-heptose-6-epimerase from Chromobacterium violaceum (strain ATCC 12472 / DSM 30191 / JCM 1249 / CCUG 213 / NBRC 12614 / NCIMB 9131 / NCTC 9757 / MK).